The primary structure comprises 315 residues: Small ribosomal subunit biogenesis GTPase RsgA (315 aa).

The region spanning 79 to 243 is the CP-type G domain; it reads LSKESHILGA…LIDTPGIKGF (165 aa). Residues 128-131 and 182-190 contribute to the GTP site; these read NKID and GHSGVGKSS. 4 residues coordinate Zn(2+): Cys267, Cys272, His274, and Cys280.

Belongs to the TRAFAC class YlqF/YawG GTPase family. RsgA subfamily. As to quaternary structure, monomer. Associates with 30S ribosomal subunit, binds 16S rRNA. Zn(2+) is required as a cofactor.

The protein resides in the cytoplasm. Its function is as follows. One of several proteins that assist in the late maturation steps of the functional core of the 30S ribosomal subunit. Helps release RbfA from mature subunits. May play a role in the assembly of ribosomal proteins into the subunit. Circularly permuted GTPase that catalyzes slow GTP hydrolysis, GTPase activity is stimulated by the 30S ribosomal subunit. The sequence is that of Small ribosomal subunit biogenesis GTPase RsgA from Porphyromonas gingivalis (strain ATCC 33277 / DSM 20709 / CIP 103683 / JCM 12257 / NCTC 11834 / 2561).